The primary structure comprises 169 residues: Photosystem I assembly protein Ycf3 (169 aa).

TPR repeat units follow at residues 35–68 (AFSY…EIDP), 72–105 (SYIL…NPAL), and 120–153 (GEQA…APSN).

Belongs to the Ycf3 family.

It localises to the plastid. The protein resides in the chloroplast thylakoid membrane. Essential for the assembly of the photosystem I (PSI) complex. May act as a chaperone-like factor to guide the assembly of the PSI subunits. The sequence is that of Photosystem I assembly protein Ycf3 from Chaetosphaeridium globosum (Charophycean green alga).